The sequence spans 284 residues: Bifunctional protein FolD (284 aa).

Residues 164-166 (GRS) and Ser189 contribute to the NADP(+) site.

The protein belongs to the tetrahydrofolate dehydrogenase/cyclohydrolase family. As to quaternary structure, homodimer.

It carries out the reaction (6R)-5,10-methylene-5,6,7,8-tetrahydrofolate + NADP(+) = (6R)-5,10-methenyltetrahydrofolate + NADPH. The enzyme catalyses (6R)-5,10-methenyltetrahydrofolate + H2O = (6R)-10-formyltetrahydrofolate + H(+). Its pathway is one-carbon metabolism; tetrahydrofolate interconversion. Its function is as follows. Catalyzes the oxidation of 5,10-methylenetetrahydrofolate to 5,10-methenyltetrahydrofolate and then the hydrolysis of 5,10-methenyltetrahydrofolate to 10-formyltetrahydrofolate. This is Bifunctional protein FolD from Listeria monocytogenes serotype 4a (strain HCC23).